The sequence spans 397 residues: Elongation factor Tu (397 aa).

Residues 10 to 206 (KPHVNIGTIG…AVDSYIPTPE (197 aa)) enclose the tr-type G domain. The tract at residues 19 to 26 (GHVDHGKT) is G1. 19–26 (GHVDHGKT) provides a ligand contact to GTP. Threonine 26 is a binding site for Mg(2+). Positions 60 to 64 (GITIN) are G2. The segment at 81 to 84 (DCPG) is G3. GTP is bound by residues 81–85 (DCPGH) and 136–139 (NKAD). The tract at residues 136 to 139 (NKAD) is G4. Residues 174–176 (SAL) form a G5 region.

The protein belongs to the TRAFAC class translation factor GTPase superfamily. Classic translation factor GTPase family. EF-Tu/EF-1A subfamily. In terms of assembly, monomer.

The protein localises to the cytoplasm. The catalysed reaction is GTP + H2O = GDP + phosphate + H(+). Functionally, GTP hydrolase that promotes the GTP-dependent binding of aminoacyl-tRNA to the A-site of ribosomes during protein biosynthesis. This Clostridium beijerinckii (strain ATCC 51743 / NCIMB 8052) (Clostridium acetobutylicum) protein is Elongation factor Tu.